The chain runs to 413 residues: uncharacterized protein (413 aa).

This is an uncharacterized protein from Mycobacterium tuberculosis (strain ATCC 25618 / H37Rv).